Consider the following 342-residue polypeptide: MIRVLVVEDMPTARQLLVGILSADPELEVVGQASDGAEALALVRALRPDAITMDVMMMPVDGIQATAQIMAERPTPIVIVTSLDVNEVTLSMKALAAGALAALPKPRGPGSPGFADDARRLVTTVKAMSRVALLRRPEPARAAAPPPAAPPDVPRGRVVAVAASTGGPAALQRILARLPAALPAPLLVVQHIALGFAEGFARWLASAGPLPARVARDGLLLEPGVVHVAPDDRHLGVSADGTRATVTDAAPVGGFRPSGTPLFRSVAAAYGAGAVGVILSGMGRDGVEGLADLRRAGGRVVAQEAASCAVDGMPGAARAAGLADAVLAPDAIADRLALWLRR.

The Response regulatory domain maps to 3-120; that stretch reads RVLVVEDMPT…SPGFADDARR (118 aa). Asp54 carries the post-translational modification 4-aspartylphosphate. The region spanning 152 to 342 is the CheB-type methylesterase domain; sequence DVPRGRVVAV…ADRLALWLRR (191 aa). Residues Ser164, His191, and Asp285 contribute to the active site.

This sequence belongs to the CheB family. Post-translationally, phosphorylated by CheA. Phosphorylation of the N-terminal regulatory domain activates the methylesterase activity.

It localises to the cytoplasm. The catalysed reaction is [protein]-L-glutamate 5-O-methyl ester + H2O = L-glutamyl-[protein] + methanol + H(+). It catalyses the reaction L-glutaminyl-[protein] + H2O = L-glutamyl-[protein] + NH4(+). In terms of biological role, involved in chemotaxis. Part of a chemotaxis signal transduction system that modulates chemotaxis in response to various stimuli. Catalyzes the demethylation of specific methylglutamate residues introduced into the chemoreceptors (methyl-accepting chemotaxis proteins or MCP) by CheR. Also mediates the irreversible deamidation of specific glutamine residues to glutamic acid. The chain is Protein-glutamate methylesterase/protein-glutamine glutaminase 3 from Anaeromyxobacter dehalogenans (strain 2CP-C).